The following is a 314-amino-acid chain: E3 ubiquitin-protein ligase CHIP (314 aa).

Basic and acidic residues predominate over residues methionine 1 to glycine 11. The interval methionine 1–phenylalanine 47 is disordered. Residues glycine 12–serine 29 show a composition bias toward gly residues. Positions glutamate 31–glycine 43 are enriched in basic and acidic residues. 3 TPR repeats span residues alanine 36–valine 69, alanine 70–serine 103, and lysine 105–glutamine 137. The 75-residue stretch at aspartate 237–valine 311 folds into the U-box domain.

As to quaternary structure, homodimer.

The protein localises to the cytoplasm. It localises to the nucleus. It is found in the mitochondrion. It catalyses the reaction S-ubiquitinyl-[E2 ubiquitin-conjugating enzyme]-L-cysteine + [acceptor protein]-L-lysine = [E2 ubiquitin-conjugating enzyme]-L-cysteine + N(6)-ubiquitinyl-[acceptor protein]-L-lysine.. In terms of biological role, E3 ubiquitin-protein ligase which targets misfolded chaperone substrates towards proteasomal degradation. Collaborates with ATXN3 in the degradation of misfolded chaperone substrates: ATXN3 restricting the length of ubiquitin chain attached to STUB1/CHIP substrates and preventing further chain extension. The sequence is that of E3 ubiquitin-protein ligase CHIP from Gallus gallus (Chicken).